A 24-amino-acid chain; its full sequence is Brevinin-1 (24 aa).

C18 and C24 are disulfide-bonded.

Belongs to the frog skin active peptide (FSAP) family. Brevinin subfamily. Expressed by the skin glands.

The protein localises to the secreted. Functionally, shows antibacterial activity against representative Gram-negative and Gram-positive bacterial species, and a very high hemolytic activity. In Pelophylax porosus brevipodus (Nagoya Daruma pond frog), this protein is Brevinin-1.